Here is an 840-residue protein sequence, read N- to C-terminus: MAGPGSTGGQIGAGALAGGARSKVAPSVDFDHSCSDSVEYLTLNFGPFETVHRWRRLPPCDEFVGARRSKHTVVAYKDAIYVFGGDNGKTMLNDLLRFDVKDCSWCRAFTTGTPPAPRYHHSAVVYGSSMFVFGGYAGDIYSNSNLKNKNDLFEYKFATGQWTEWKIEGRLPVARSAHGATVYSDKLWIFAGYDGNARLNDMWTIGLQDRELTCWEEVAQSGEIPPSCCNFPVAVRRDKMFVFSGQSGAKITNNLFQFEFKDKTWTRIPTEHLLRGSPPPPQRRYGHTMVAFDRHLYVFGGAADNTLPNELHCYDVDFQTWEVVQPSSDSEVGGAEVPERACASEEVPTLTSEERGGFKKSRDVFGLDFGTTSAKQPAQPASELPSGRLFHAAAVISDAMYIFGGTVDNNIRSGEMYRFQFSCYPKCTLHEDYGRLWESRQFCDVEFVLGEKEECVQGHVAIVTARSRWLRRKITQARERLAQKLEQEAAPVPREAPGVAAGGARPPLLHVAIREAEARPFEVLMQFLYTDKIKYPRKGHVEDVLLIMDVYKLALSFQLCRLEQLCRQYIEASVDLQNVLVVCESAARLQLSQLKEHCLNFVVKESHFNQVIMMKEFERLSSPLIVEIVRRKQQPPPRTPSDQPVDIGTSLIQDMKAYLEGAGAEFCDITLLLDGHPRPAHKAILAARSSYFEAMFRSFMPEDGQVNISIGEMVPSRQAFESMLRYIYYGEVNMPPEDSLYLFAAPYYYGFYNNRLQAYCKQNLEMNATVQNVLQILEAADKTQALDMKRHCLHIIVHQFTKVSKLPTLRSLSQQLLLDIIDSLASHISDKQCAELGADI.

At A2 the chain carries N-acetylalanine. Kelch repeat units lie at residues 79 to 128, 130 to 185, 187 to 238, 239 to 285, 295 to 341, and 399 to 450; these read AIYV…VYGS, MFVF…VYSD, LWIF…VRRD, KMFV…QRRY, HLYV…PERA, and AMYI…FVLG. Residues 329 to 353 are disordered; that stretch reads DSEVGGAEVPERACASEEVPTLTSE. BTB domains lie at 443-537 and 667-736; these read CDVE…KYPR and CDIT…NMPP.

The protein belongs to the LZTR1 family. As to quaternary structure, homodimer. Component of the BCR(LZTR1) E3 ubiquitin ligase complex, at least composed of CUL3, LZTR1 and RBX1. Interacts with Ras (K-Ras/KRAS, N-Ras/NRAS and H-Ras/HRAS). Interacts with RAF1. Interacts with SHOC2. Interacts with PPP1CB. In terms of processing, phosphorylated on tyrosine upon induction of apoptosis, leading to its degradation by the proteasome.

It is found in the endomembrane system. The protein localises to the recycling endosome. The protein resides in the golgi apparatus. It participates in protein modification; protein ubiquitination. In terms of biological role, substrate-specific adapter of a BCR (BTB-CUL3-RBX1) E3 ubiquitin-protein ligase complex that mediates ubiquitination of Ras (K-Ras/KRAS, N-Ras/NRAS and H-Ras/HRAS). Is a negative regulator of RAS-MAPK signaling that acts by controlling Ras levels and decreasing Ras association with membranes. The polypeptide is Leucine-zipper-like transcriptional regulator 1 (LZTR1) (Pongo abelii (Sumatran orangutan)).